Reading from the N-terminus, the 156-residue chain is Small ribosomal subunit protein uS7c (156 aa).

Belongs to the universal ribosomal protein uS7 family. In terms of assembly, part of the 30S ribosomal subunit.

It is found in the plastid. Its subcellular location is the chloroplast. Functionally, one of the primary rRNA binding proteins, it binds directly to 16S rRNA where it nucleates assembly of the head domain of the 30S subunit. This Nephroselmis olivacea (Green alga) protein is Small ribosomal subunit protein uS7c (rps7).